The sequence spans 396 residues: MAADLRVSIAHQTSFALRLAAALSSPAHPAGGAGRNVAFSPLSLHVALSLVAAGAGGATRDQLASALGGPGSAEGLHAFAEQLVQLVLADASGAGGPRVAFADGVFVDASLSLKKTFGDVAVGKYKAETHSVDFQTKAAEVASQVNSWVEKVTSGLIKEILPPGSVDHTTRLVLGNALYFKGAWTEKFDASKTKDGEFHLLDGKSVQAPFMSTSKKQYILSYDNLKVLKLPYQQGGDKRQFSMYILLPEAQDGLWSLAEKLNSEPEFLEKHIPTRQVTVGQFKLPKFKISFGFEASDLLKSLGLHLPFSSEADLTEMVDSPEGKNLFVSSVFHKSFVEVNEEGTEAAAATAAVITLRSAPIAEDFVADHPFLFLIQEDMTGVVLFVGHVVNPLLAA.

An RCL region spans residues 343–367; that stretch reads GTEAAAATAAVITLRSAPIAEDFVA.

It belongs to the serpin family.

Its function is as follows. Probable serine protease inhibitor. In Oryza sativa subsp. japonica (Rice), this protein is Serpin-ZXA.